Reading from the N-terminus, the 534-residue chain is Melanopsin-B (534 aa).

The Extracellular portion of the chain corresponds to 1–32; the sequence is MDLGKTVEYGTHRQDAIAQIDVPDQVLYTIGS. The chain crosses the membrane as a helical span at residues 33-53; that stretch reads FILIIGSVGIIGNMLVLYAFY. Topologically, residues 54–64 are cytoplasmic; that stretch reads RNKKLRTAPNY. A helical membrane pass occupies residues 65–85; it reads FIINLAISDFLMSATQAPVCF. Topologically, residues 86-102 are extracellular; it reads LSSLHREWILGDIGCNV. An intrachain disulfide couples cysteine 100 to cysteine 178. The chain crosses the membrane as a helical span at residues 103-123; sequence YAFCGALFGITSMMTLLAISI. Over 124-146 the chain is Cytoplasmic; that stretch reads NRYIVITKPLQSIQWSSKKRTSQ. The chain crosses the membrane as a helical span at residues 147 to 167; sequence IIVLVWMYSLMWSLAPLLGWS. Residues 168–198 are Extracellular-facing; it reads SYVPEGLRISCTWDYVTSTMSNRSYTMMLCC. The N-linked (GlcNAc...) asparagine glycan is linked to asparagine 189. Residues 199–219 traverse the membrane as a helical segment; the sequence is CVFFIPLIVISHCYLFMFLAI. Residues 220 to 250 are Cytoplasmic-facing; it reads RSTGRNVQKLGSYGRQSFLSQSMKNEWKMAK. Residues 251–271 form a helical membrane-spanning segment; it reads IAFVIIIVFVLSWSPYACVTL. The Extracellular portion of the chain corresponds to 272–286; the sequence is IAWAGHGKSLTPYSK. A helical membrane pass occupies residues 287–307; it reads TVPAVIAKASAIYNPIIYGII. Position 294 is an N6-(retinylidene)lysine (lysine 294). Over 308–534 the chain is Cytoplasmic; that stretch reads HPKYRETIHK…LYEVVERFLS (227 aa). A disordered region spans residues 478 to 501; that stretch reads SNISETKEEHDNNSEEKSKRTEEE. The segment covering 482 to 499 has biased composition (basic and acidic residues); the sequence is ETKEEHDNNSEEKSKRTE.

The protein belongs to the G-protein coupled receptor 1 family. Opsin subfamily. Highest level in the iris, high level in the inner nuclear layer, possibly in horizontal cells, and lowest level in retinal pigment epithelium. Expressed in melanophore cells of the skin.

The protein localises to the cell membrane. In terms of biological role, photoreceptor implicated in non-image-forming responses to light. May be able to isomerize covalently bound all-trans retinal back to 11-cis retinal. The protein is Melanopsin-B of Xenopus laevis (African clawed frog).